A 431-amino-acid polypeptide reads, in one-letter code: Probable carboxylic ester hydrolase LipM (431 aa).

Helical transmembrane passes span 7–27, 38–58, and 75–95; these read IHVI…AATI, FASL…LPTL, and PVRA…LNLS. Catalysis depends on residues Ser261, Asp357, and His390.

This sequence belongs to the 'GDXG' lipolytic enzyme family.

The protein localises to the membrane. This Mycobacterium tuberculosis (strain ATCC 25618 / H37Rv) protein is Probable carboxylic ester hydrolase LipM.